The sequence spans 318 residues: Taste receptor type 2 member 60 (318 aa).

Residues 1 to 7 (MNGDHMV) lie on the Extracellular side of the membrane. Residues 8–28 (LGSSVTDQKAIILVIILLLLC) form a helical membrane-spanning segment. The Cytoplasmic segment spans residues 29 to 40 (LVAIAGNGFITA). Residues 41-61 (ALGVEWVLRGTLLPCDKLLVS) traverse the membrane as a helical segment. Topologically, residues 62 to 88 (LRASRFCLQWVVMGKTIYVLLYPTAFP) are extracellular. Residues 89-109 (YNPVLQFLAFQWDFLNAATLW) form a helical membrane-spanning segment. At 110 to 128 (FSSWLSVFYCVKIATFTHP) the chain is on the cytoplasmic side. A helical membrane pass occupies residues 129–149 (VFLWLKHKLSEWVPWMFFSSV). Residues 150-183 (GLSSFTTILFFIGNHSIYQNYLRNHLQPWNVTGN) are Extracellular-facing. Asn163 and Asn179 each carry an N-linked (GlcNAc...) asparagine glycan. Residues 184–204 (SIWSYCEKFYLFPVKMITWTM) traverse the membrane as a helical segment. Over 205–234 (PTAVFFICMILLITSLGRHMEKALLTTSGF) the chain is Cytoplasmic. The chain crosses the membrane as a helical span at residues 235-255 (REPSVQAHVKALLALLSLAML). The Extracellular portion of the chain corresponds to 256–264 (FISYFLSLV). A helical transmembrane segment spans residues 265-285 (LSAAGIFPPLDFKFWVGESVI). The Cytoplasmic portion of the chain corresponds to 286 to 318 (YLCAGVHPIILLFSNRRLRAVLERCRSSRCRTP).

This sequence belongs to the G-protein coupled receptor T2R family.

Its subcellular location is the membrane. Its function is as follows. Receptor that may play a role in the perception of bitterness and is gustducin-linked. May play a role in sensing the chemical composition of the gastrointestinal content. The activity of this receptor may stimulate alpha gustducin, mediate PLC-beta-2 activation and lead to the gating of TRPM5. The protein is Taste receptor type 2 member 60 (TAS2R60) of Macaca mulatta (Rhesus macaque).